Consider the following 89-residue polypeptide: Myrmicitoxin(1)-Pr2a (89 aa).

An N-terminal signal peptide occupies residues 1 to 23; the sequence is MEIPKLLYIAVIAIGLSGSLTCA. Positions 24-61 are excised as a propeptide; that stretch reads TPLANPWADPEAEANPEAKAIAEATAEAIAEALAEPEP. Asn-88 carries the asparagine amide modification.

This sequence belongs to the formicidae venom clade 1 family. As to expression, expressed by the venom gland.

The protein resides in the secreted. Its function is as follows. Vertebrate-selective toxin that causes pain by targeting voltage-gated sodium channels. The protein is Myrmicitoxin(1)-Pr2a of Pogonomyrmex rugosus (Desert harvester ant).